Here is a 501-residue protein sequence, read N- to C-terminus: MNAHSPAAKTAIVIGAGFGGLALAIRLQSAGIATTLVEARDKPGGRAYVWHDQGHLFDAGPTVITDPDALKELWALTGQDMARDVTLMPVSPFYRLMWPGGKVFDYVNEADQLERQIAQFNPDDLEGYRRFRDYAEEVYQEGYVKLGTVPFLKLGQMLKAAPALMKLEAYKSVHAKVATFIKDPYLRQAFSYHTLLVGGNPFSTSSIYALIHALERRGGVWFAKGGTNQLVAGMVALFERLGGQMLLNAKVARIDTDGPRATGVTLADGRALTADMVASNGDVMHNYRDLLGHTARGQSRAKSLNAKRWSMSLFVLHFGLREAPKDVAHHTILFGPRYKELVNEIFKGPKLAEDFSLYLHSPCTTDPEMAPPGMSTHYVLAPVPHLGRADIDWAVEGPRYADRILASLEERLIPNLRANLTTTRIFTPSDFASELNAHHGSAFSVEPILTQSAWFRPHNRDKTIRNFYLVGAGTHPGAGIPGVVGSAKATAQVMLSDLASA.

Residue isoleucine 12–glycine 45 participates in FAD binding.

The protein belongs to the carotenoid/retinoid oxidoreductase family. The cofactor is FAD.

The enzyme catalyses 15-cis-phytoene + 4 A = all-trans-lycopene + 4 AH2. It functions in the pathway carotenoid biosynthesis; astaxanthin biosynthesis. Its function is as follows. This enzyme converts phytoene into lycopene via the intermediaries of phytofluene, zeta-carotene and neurosporene by the introduction of four double bonds. This chain is Phytoene desaturase (lycopene-forming) (crtI), found in Paracoccus sp. (strain N81106 / MBIC 01143) (Agrobacterium aurantiacum).